Here is a 133-residue protein sequence, read N- to C-terminus: MRGFIANSLKPHMRSFALRRSFTSSRILRKVNAVESFGDYNTRISADKVTVVDFYADWCGPCKYLKPFLEKLSEQNQKASFIAVNADKFSDIAQKNGVYALPTMVLFRKGQELDRIVGADVKTLSSLLAKYQE.

The N-terminal 29 residues, Met1–Arg29, are a transit peptide targeting the mitochondrion. The Thioredoxin domain maps to Lys30–Glu133. Active-site nucleophile residues include Cys59 and Cys62. Cys59 and Cys62 form a disulfide bridge.

The protein belongs to the thioredoxin family. In terms of assembly, interacts with arg3.

The protein resides in the mitochondrion. In terms of biological role, disulfide reductase which serves multiple functions in mitochondria, protecting mitochondrial components against thiol-oxidative damage as a thiol-disulfide oxidoreductase, and supporting urea cycle and respiration in mitochondria in a manner independent of active site thiols. The polypeptide is Thioredoxin-2, mitochondrial (trx2) (Schizosaccharomyces pombe (strain 972 / ATCC 24843) (Fission yeast)).